The sequence spans 132 residues: Bleomycin resistance protein (132 aa).

Residues 1–129 enclose the VOC domain; sequence MLQSIPALPV…DNNLISFFQQ (129 aa).

This sequence belongs to the bleomycin resistance protein family.

Its function is as follows. Binding protein with a strong affinity to the bleomycin family of antibiotics. This is Bleomycin resistance protein (bleO) from Geobacillus stearothermophilus (Bacillus stearothermophilus).